A 404-amino-acid polypeptide reads, in one-letter code: Phospho-N-acetylmuramoyl-pentapeptide-transferase (404 aa).

10 consecutive transmembrane segments (helical) span residues Ser30–Phe50, Ile73–Ala93, Ile100–Ile120, Gly132–Phe152, Tyr209–Ala229, Thr242–Phe262, Leu274–Tyr294, Ile301–Val321, Leu326–Val346, and Lys381–Leu401.

Belongs to the glycosyltransferase 4 family. MraY subfamily. Requires Mg(2+) as cofactor.

It localises to the cell inner membrane. The enzyme catalyses UDP-N-acetyl-alpha-D-muramoyl-L-alanyl-gamma-D-glutamyl-meso-2,6-diaminopimeloyl-D-alanyl-D-alanine + di-trans,octa-cis-undecaprenyl phosphate = di-trans,octa-cis-undecaprenyl diphospho-N-acetyl-alpha-D-muramoyl-L-alanyl-D-glutamyl-meso-2,6-diaminopimeloyl-D-alanyl-D-alanine + UMP. It participates in cell wall biogenesis; peptidoglycan biosynthesis. Functionally, catalyzes the initial step of the lipid cycle reactions in the biosynthesis of the cell wall peptidoglycan: transfers peptidoglycan precursor phospho-MurNAc-pentapeptide from UDP-MurNAc-pentapeptide onto the lipid carrier undecaprenyl phosphate, yielding undecaprenyl-pyrophosphoryl-MurNAc-pentapeptide, known as lipid I. The chain is Phospho-N-acetylmuramoyl-pentapeptide-transferase from Amoebophilus asiaticus (strain 5a2).